Reading from the N-terminus, the 598-residue chain is Serine/threonine-protein kinase cot-1 (598 aa).

3 stretches are compositionally biased toward polar residues: residues 1-16, 24-33, and 99-126; these read MDNTNRPHLNLGTNDT, TYPTTPSTFP, and PRTSGNSGQQQTYGNYLSAPMPSNTQTE. Disordered regions lie at residues 1–46, 80–148, and 163–190; these read MDNT…GGSQ, GSAG…NQKK, and RARERNQRQSEMEQKLGETNDARRRESI. One can recognise a Protein kinase domain in the interval 214 to 518; it reads YQTIKIIGKG…AHEIKSHAFF (305 aa). ATP contacts are provided by residues 220-228 and Lys243; that span reads IGKGAFGEV. Catalysis depends on Asp337, which acts as the Proton acceptor. Residues 519–598 enclose the AGC-kinase C-terminal domain; sequence RGVEFDSLRR…TFKRFDNNFR (80 aa).

It belongs to the protein kinase superfamily. STE Ser/Thr protein kinase family. COT1 subfamily.

It carries out the reaction L-seryl-[protein] + ATP = O-phospho-L-seryl-[protein] + ADP + H(+). The enzyme catalyses L-threonyl-[protein] + ATP = O-phospho-L-threonyl-[protein] + ADP + H(+). Its function is as follows. Protein kinase required for hyphal elongation. The chain is Serine/threonine-protein kinase cot-1 (cot-1) from Neurospora crassa (strain ATCC 24698 / 74-OR23-1A / CBS 708.71 / DSM 1257 / FGSC 987).